We begin with the raw amino-acid sequence, 352 residues long: MSDRRAALESALRQIEKQFGKGSIMKLGEVSNIQISTASSGALALDIALGVGGFPRGRIVEIYGPESSGKTTVALHAIAEVQRQGGQAAFIDAEHALDPVYAAKLGVNIDELLLSQPDTGEQALEIAEALVRSGAVDIIVVDSVAALVPKAEIEGEMGDSHVGLQARLMSQALRKLSGAINKSKTIAIFINQLREKVGVMFGNPETTPGGRALKFYASVRLDVRKAESIKVGNDILGSKTKIKVVKNKVAPPFKVAEVDIMYGEGISREGSILDIGSEIDVVQKSGAWYSFNEERLGQGRENSKVFLKENPHIASQIETKVREYFSLNPSSVPEAEAEHDPEQDEEPTFDLE.

Residue 64–71 participates in ATP binding; it reads GPESSGKT. The tract at residues 328–352 is disordered; the sequence is NPSSVPEAEAEHDPEQDEEPTFDLE. Positions 335–352 are enriched in acidic residues; that stretch reads AEAEHDPEQDEEPTFDLE.

It belongs to the RecA family.

It is found in the cytoplasm. Functionally, can catalyze the hydrolysis of ATP in the presence of single-stranded DNA, the ATP-dependent uptake of single-stranded DNA by duplex DNA, and the ATP-dependent hybridization of homologous single-stranded DNAs. It interacts with LexA causing its activation and leading to its autocatalytic cleavage. The chain is Protein RecA from Brevibacillus brevis (strain 47 / JCM 6285 / NBRC 100599).